A 489-amino-acid polypeptide reads, in one-letter code: Beta-dihydromenaquinone-9 omega-hydroxylase (489 aa).

C435 contacts heme.

It belongs to the cytochrome P450 family. Requires heme as cofactor.

Its subcellular location is the cytoplasm. The enzyme catalyses beta-dihydromenaquinone-9 + 2 reduced [2Fe-2S]-[ferredoxin] + O2 + 2 H(+) = omega-hydroxy-beta-dihydromenaquinone-9 + 2 oxidized [2Fe-2S]-[ferredoxin] + H2O. Involved in the biosynthesis of sulfomenaquinone (SMK, initially named S881 on the basis of its mass), which is localized in the outer envelope of M.bovis and negatively regulates its virulence. Catalyzes the hydroxylation of beta-dihydromenaquinone-9, leading to the formation of omega-hydroxy-beta-dihydromenaquinone-9. The sequence is that of Beta-dihydromenaquinone-9 omega-hydroxylase (cyp128) from Mycobacterium bovis (strain ATCC BAA-935 / AF2122/97).